We begin with the raw amino-acid sequence, 154 residues long: 6,7-dimethyl-8-ribityllumazine synthase (154 aa).

Residues F22, 56–58 (SFE), and 81–83 (VLI) each bind 5-amino-6-(D-ribitylamino)uracil. 86-87 (ET) provides a ligand contact to (2S)-2-hydroxy-3-oxobutyl phosphate. The Proton donor role is filled by H89. F114 serves as a coordination point for 5-amino-6-(D-ribitylamino)uracil. Residue R128 coordinates (2S)-2-hydroxy-3-oxobutyl phosphate.

The protein belongs to the DMRL synthase family.

The catalysed reaction is (2S)-2-hydroxy-3-oxobutyl phosphate + 5-amino-6-(D-ribitylamino)uracil = 6,7-dimethyl-8-(1-D-ribityl)lumazine + phosphate + 2 H2O + H(+). It participates in cofactor biosynthesis; riboflavin biosynthesis; riboflavin from 2-hydroxy-3-oxobutyl phosphate and 5-amino-6-(D-ribitylamino)uracil: step 1/2. In terms of biological role, catalyzes the formation of 6,7-dimethyl-8-ribityllumazine by condensation of 5-amino-6-(D-ribitylamino)uracil with 3,4-dihydroxy-2-butanone 4-phosphate. This is the penultimate step in the biosynthesis of riboflavin. This is 6,7-dimethyl-8-ribityllumazine synthase from Chlamydia felis (strain Fe/C-56) (Chlamydophila felis).